Consider the following 325-residue polypeptide: Small ribosomal subunit protein RACK1 (325 aa).

WD repeat units lie at residues 13–44, 61–91, 103–133, 147–179, 191–221, 232–261, and 291–321; these read AHTD…ILWH, GHSH…RLWD, GHTK…KLWN, AHSD…KVWN, GHSG…LLWD, DAGS…KIWD, and KKVI…RVWG.

It belongs to the WD repeat G protein beta family. Ribosomal protein RACK1 subfamily.

Plays a role in hormone-mediated cell division. The polypeptide is Small ribosomal subunit protein RACK1 (GB1) (Medicago sativa (Alfalfa)).